Here is a 162-residue protein sequence, read N- to C-terminus: ATVPLTMDGLDLQKVAGTWHSMAMAASDISLLDSEYAPLRVYVQELRPTPRDNLEIILRKWEQKRCVQKKILAQKTELPAEFKISYLDENELIVLDTDYENYLFFCLENADAPGQNLVCQCLTRTLKADNEVMEKFDRALQTLPVDVRLFFDPTQVAEQCRI.

Cystine bridges form between Cys-66–Cys-160 and Cys-106–Cys-119.

It belongs to the calycin superfamily. Lipocalin family. In terms of assembly, monomer.

Its subcellular location is the secreted. Its function is as follows. Lactoglobulin is the primary component of whey, it binds retinol and is probably involved in the transport of that molecule. The chain is Beta-lactoglobulin-3 (LGB3) from Felis catus (Cat).